The sequence spans 127 residues: Large ribosomal subunit protein bL12 (127 aa).

The protein belongs to the bacterial ribosomal protein bL12 family. Homodimer. Part of the ribosomal stalk of the 50S ribosomal subunit. Forms a multimeric L10(L12)X complex, where L10 forms an elongated spine to which 2 to 4 L12 dimers bind in a sequential fashion. Binds GTP-bound translation factors.

Forms part of the ribosomal stalk which helps the ribosome interact with GTP-bound translation factors. Is thus essential for accurate translation. This is Large ribosomal subunit protein bL12 from Symbiobacterium thermophilum (strain DSM 24528 / JCM 14929 / IAM 14863 / T).